A 345-amino-acid chain; its full sequence is Phosphoribosylformylglycinamidine cyclo-ligase (345 aa).

It belongs to the AIR synthase family.

The protein resides in the cytoplasm. The enzyme catalyses 2-formamido-N(1)-(5-O-phospho-beta-D-ribosyl)acetamidine + ATP = 5-amino-1-(5-phospho-beta-D-ribosyl)imidazole + ADP + phosphate + H(+). The protein operates within purine metabolism; IMP biosynthesis via de novo pathway; 5-amino-1-(5-phospho-D-ribosyl)imidazole from N(2)-formyl-N(1)-(5-phospho-D-ribosyl)glycinamide: step 2/2. The protein is Phosphoribosylformylglycinamidine cyclo-ligase of Sodalis glossinidius (strain morsitans).